The following is a 108-amino-acid chain: uncharacterized protein (108 aa).

This is an uncharacterized protein from Acanthamoeba polyphaga mimivirus (APMV).